Here is a 323-residue protein sequence, read N- to C-terminus: GILT-like protein C02D5.2 (323 aa).

A helical transmembrane segment spans residues 13-32; it reads LICRPILTFSSLHILTAFLI. A glycan (N-linked (GlcNAc...) asparagine) is linked at Asn-35. 2 helical membrane passes run 37 to 59 and 87 to 104; these read SYIN…HRFL and YIYG…YRSL. Residue Asn-289 is glycosylated (N-linked (GlcNAc...) asparagine).

This sequence belongs to the GILT family.

It localises to the membrane. The polypeptide is GILT-like protein C02D5.2 (Caenorhabditis elegans).